Consider the following 343-residue polypeptide: Cilia- and flagella-associated protein 36 (343 aa).

Residues serine 85 and serine 147 each carry the phosphoserine modification. Positions 147-181 (SDLEQEEMKILREVLRKSKEEYDQEEERKRKKQSS) form a coiled coil. Positions 165-191 (KEEYDQEEERKRKKQSSEGKMEEPPIY) are disordered. At serine 201 the chain carries Phosphoserine. Positions 286-323 (SMRKDMRAKQIQNTEQKGKPTREAEEMTEKPEMTAEEK) are disordered. Basic and acidic residues predominate over residues 301–323 (QKGKPTREAEEMTEKPEMTAEEK).

This sequence belongs to the CFAP36 family. In terms of assembly, interacts with ARL3. In terms of tissue distribution, widely expressed (at protein level).

Its subcellular location is the nucleus. It is found in the cytoplasm. It localises to the cell projection. The protein resides in the cilium. The protein localises to the flagellum. Functionally, may act as an effector for ARL3. The chain is Cilia- and flagella-associated protein 36 from Rattus norvegicus (Rat).